A 28-amino-acid polypeptide reads, in one-letter code: GLWSKIKDVAAAAGKAALGAVNEALGEQ.

Belongs to the frog skin active peptide (FSAP) family. Dermaseptin subfamily. As to expression, expressed by the skin glands.

Its subcellular location is the secreted. Functionally, possesses a potent antimicrobial activity against Gram-positive and Gram-negative bacteria. Probably acts by disturbing membrane functions with its amphipathic structure. This chain is Dermaseptin-H2, found in Pithecopus azureus (Orange-legged monkey tree frog).